The primary structure comprises 137 residues: Large ribosomal subunit protein uL16 (137 aa).

Residues 1-17 (MLQPKRTKFRKQQKGRN) are compositionally biased toward basic residues. A disordered region spans residues 1–24 (MLQPKRTKFRKQQKGRNRGLAQSG).

Belongs to the universal ribosomal protein uL16 family. Part of the 50S ribosomal subunit.

Its function is as follows. Binds 23S rRNA and is also seen to make contacts with the A and possibly P site tRNAs. The sequence is that of Large ribosomal subunit protein uL16 from Dichelobacter nodosus (strain VCS1703A).